We begin with the raw amino-acid sequence, 327 residues long: Malate dehydrogenase 1 (327 aa).

12 to 18 (GAAGQIA) is a binding site for NAD(+). Positions 93 and 99 each coordinate substrate. NAD(+) is bound by residues N106, Q113, and 130–132 (VGN). Residues N132 and R163 each coordinate substrate. The active-site Proton acceptor is the H188.

The protein belongs to the LDH/MDH superfamily. MDH type 2 family.

The catalysed reaction is (S)-malate + NAD(+) = oxaloacetate + NADH + H(+). Functionally, catalyzes the reversible oxidation of malate to oxaloacetate. This chain is Malate dehydrogenase 1, found in Burkholderia thailandensis (strain ATCC 700388 / DSM 13276 / CCUG 48851 / CIP 106301 / E264).